The following is a 224-amino-acid chain: LexA repressor (224 aa).

The H-T-H motif DNA-binding region spans 31–51 (RAEIATELGFRSANAAEEHLQ). Residues Ser-142 and Lys-179 each act as for autocatalytic cleavage activity in the active site.

This sequence belongs to the peptidase S24 family. As to quaternary structure, homodimer.

It catalyses the reaction Hydrolysis of Ala-|-Gly bond in repressor LexA.. Functionally, represses a number of genes involved in the response to DNA damage (SOS response), including recA and lexA. In the presence of single-stranded DNA, RecA interacts with LexA causing an autocatalytic cleavage which disrupts the DNA-binding part of LexA, leading to derepression of the SOS regulon and eventually DNA repair. The chain is LexA repressor from Albidiferax ferrireducens (strain ATCC BAA-621 / DSM 15236 / T118) (Rhodoferax ferrireducens).